Consider the following 326-residue polypeptide: uncharacterized protein (326 aa).

Tyr-53 acts as the Proton donor in catalysis. 215 to 225 (SPLAGGLLGGK) contributes to the NADP(+) binding site. Residues 242 to 305 (IEKHRLQLEK…AVEISLDKEI (64 aa)) are a coiled coil.

It belongs to the aldo/keto reductase family. Aldo/keto reductase 2 subfamily.

This is an uncharacterized protein from Bacillus subtilis (strain 168).